A 336-amino-acid polypeptide reads, in one-letter code: Pyridoxal 5'-phosphate synthase subunit PdxS (336 aa).

D-ribose 5-phosphate is bound at residue aspartate 33. The active-site Schiff-base intermediate with D-ribose 5-phosphate is lysine 90. Position 162 (glycine 162) interacts with D-ribose 5-phosphate. Arginine 174 serves as a coordination point for D-glyceraldehyde 3-phosphate. Residues glycine 260 and 281–282 (GS) each bind D-ribose 5-phosphate.

It belongs to the PdxS/SNZ family. As to quaternary structure, in the presence of PdxT, forms a dodecamer of heterodimers.

It carries out the reaction aldehydo-D-ribose 5-phosphate + D-glyceraldehyde 3-phosphate + L-glutamine = pyridoxal 5'-phosphate + L-glutamate + phosphate + 3 H2O + H(+). Its pathway is cofactor biosynthesis; pyridoxal 5'-phosphate biosynthesis. Its function is as follows. Catalyzes the formation of pyridoxal 5'-phosphate from ribose 5-phosphate (RBP), glyceraldehyde 3-phosphate (G3P) and ammonia. The ammonia is provided by the PdxT subunit. Can also use ribulose 5-phosphate and dihydroxyacetone phosphate as substrates, resulting from enzyme-catalyzed isomerization of RBP and G3P, respectively. The protein is Pyridoxal 5'-phosphate synthase subunit PdxS of Picrophilus torridus (strain ATCC 700027 / DSM 9790 / JCM 10055 / NBRC 100828 / KAW 2/3).